Consider the following 258-residue polypeptide: MKNYLLQIEYFGKNYCGWQRQSHSLSVQEELEKALSKIANQNIEVTCAGRTDTGVHATSQIVNFYSNAYRPLSAWQRGVNALLPQDIKILAVQQVDNNFNSRFTAINRTYNYIIYNSATSSPIFAEHCLWENRELDIDKMNQACEYLLGEQDFSSFRSSQCQSNTPFRNIQKAEFIKQGSFIVFEVVGNAFLHHMIRNLVGSLLKVGLGFESPEWIKVVLEAKDRTQAAETAKAHGLYFVGVEYPEFSFKRQIIKLFC.

Catalysis depends on D52, which acts as the Nucleophile. Y110 contacts substrate.

Belongs to the tRNA pseudouridine synthase TruA family. As to quaternary structure, homodimer.

It catalyses the reaction uridine(38/39/40) in tRNA = pseudouridine(38/39/40) in tRNA. Functionally, formation of pseudouridine at positions 38, 39 and 40 in the anticodon stem and loop of transfer RNAs. In Francisella tularensis subsp. holarctica (strain LVS), this protein is tRNA pseudouridine synthase A.